The chain runs to 361 residues: Histidinol-phosphate aminotransferase (361 aa).

The disordered stretch occupies residues 26 to 45 (GMDPEDLTKLSSNENPHGPS). K222 bears the N6-(pyridoxal phosphate)lysine mark.

Belongs to the class-II pyridoxal-phosphate-dependent aminotransferase family. Histidinol-phosphate aminotransferase subfamily. Pyridoxal 5'-phosphate serves as cofactor.

The catalysed reaction is L-histidinol phosphate + 2-oxoglutarate = 3-(imidazol-4-yl)-2-oxopropyl phosphate + L-glutamate. It participates in amino-acid biosynthesis; L-histidine biosynthesis; L-histidine from 5-phospho-alpha-D-ribose 1-diphosphate: step 7/9. The sequence is that of Histidinol-phosphate aminotransferase (hisC) from Haloferax volcanii (strain ATCC 29605 / DSM 3757 / JCM 8879 / NBRC 14742 / NCIMB 2012 / VKM B-1768 / DS2) (Halobacterium volcanii).